The primary structure comprises 131 residues: MIVKTKEEVVGTPREIFAPNGHWISRRYLLAGEGMGFSFHETIILAGTKTHIHYQNHLEAVFCVQGRGEVELIPSGERFLIEEGVMYALDKHDEHYLSASEEMRLICVFNPPLQGNEVHDEKGVYPLKKGQ.

It belongs to the ectoine synthase family.

It catalyses the reaction (2S)-4-acetamido-2-aminobutanoate = L-ectoine + H2O. It participates in amine and polyamine biosynthesis; ectoine biosynthesis; L-ectoine from L-aspartate 4-semialdehyde: step 3/3. Catalyzes the circularization of gamma-N-acetyl-alpha,gamma-diaminobutyric acid (ADABA) to ectoine (1,4,5,6-tetrahydro-2-methyl-4-pyrimidine carboxylic acid), which is an excellent osmoprotectant. This is L-ectoine synthase from Wolinella succinogenes (strain ATCC 29543 / DSM 1740 / CCUG 13145 / JCM 31913 / LMG 7466 / NCTC 11488 / FDC 602W) (Vibrio succinogenes).